A 371-amino-acid chain; its full sequence is Chorismate synthase (371 aa).

NADP(+) contacts are provided by Arg-48 and Arg-54. FMN contacts are provided by residues 130–132 (RSS), 242–243 (NA), Gly-287, 302–306 (KPTSS), and Arg-328.

Belongs to the chorismate synthase family. Homotetramer. FMNH2 is required as a cofactor.

The enzyme catalyses 5-O-(1-carboxyvinyl)-3-phosphoshikimate = chorismate + phosphate. The protein operates within metabolic intermediate biosynthesis; chorismate biosynthesis; chorismate from D-erythrose 4-phosphate and phosphoenolpyruvate: step 7/7. In terms of biological role, catalyzes the anti-1,4-elimination of the C-3 phosphate and the C-6 proR hydrogen from 5-enolpyruvylshikimate-3-phosphate (EPSP) to yield chorismate, which is the branch point compound that serves as the starting substrate for the three terminal pathways of aromatic amino acid biosynthesis. This reaction introduces a second double bond into the aromatic ring system. The protein is Chorismate synthase of Azorhizobium caulinodans (strain ATCC 43989 / DSM 5975 / JCM 20966 / LMG 6465 / NBRC 14845 / NCIMB 13405 / ORS 571).